Here is a 477-residue protein sequence, read N- to C-terminus: Polyketide synthase-related protein Dhc1 (477 aa).

Residues 34–112 (EKMTVREGEL…AMTHCVFDRA (79 aa)) enclose the Carrier domain. Serine 72 is modified (O-(pantetheine 4'-phosphoryl)serine). The interval 161 to 322 (LTGATSFLGS…AGEVFLENLV (162 aa)) is ketoreductase (KR) domain. Positions 410–435 (VQQQQQQQQRQSQPPRDDAADGSPTE) are disordered. A compositionally biased stretch (low complexity) spans 411 to 422 (QQQQQQQQRQSQ). Basic and acidic residues predominate over residues 424–435 (PRDDAADGSPTE).

It functions in the pathway mycotoxin biosynthesis. Functionally, polyketide synthase-related protein; part of the gene cluster that mediates the biosynthesis of 10,11-dehydrocurvularin, a prevalent fungal phytotoxin with heat shock response and immune-modulatory activities. The highly reducing polyketide synthase Dhc3 is responsible for biosynthesis up to the tetraketide stage. The non-reducing polyketide synthase Dhc5 then conducts four additional chain extension cycles, producing the unreduced part of the nascent octaketide from C-1 to C-8 in 10,11-dehydrocurvularin. The role of Dhc1 in 10,11-dehydrocurvularin biosynthesis has not been identified yet. The sequence is that of Polyketide synthase-related protein Dhc1 from Alternaria cinerariae.